A 632-amino-acid polypeptide reads, in one-letter code: Epithelial sodium channel subunit alpha (632 aa).

The Cytoplasmic portion of the chain corresponds to 1–49; that stretch reads MTKEEKNEKEALIEFFSSYRELFEFFCSNTTIHGAIRLVCSRRNRMKTA. Residues 50–70 traverse the membrane as a helical segment; it reads FWLVLFLVTFGLMYWQFGLLF. Residues 71–520 are Extracellular-facing; that stretch reads GQYFSYPVSI…SQWSLWFGSS (450 aa). 10 disulfide bridges follow: C97–C264, C189–C196, C241–C248, C355–C440, C377–C417, C377–C436, C381–C432, C390–C417, C390–C440, and C392–C406. The chain crosses the membrane as a helical span at residues 521-541; the sequence is VLSVVEMLELVIDFVIIGVMI. Residues 542–632 are Cytoplasmic-facing; that stretch reads LLHRYYYKKA…YYEENGGRRN (91 aa). Positions 612–622 are enriched in low complexity; it reads SRSSSMRSNRS. The tract at residues 612 to 632 is disordered; the sequence is SRSSSMRSNRSYYEENGGRRN. Residues 623–632 are compositionally biased toward basic and acidic residues; it reads YYEENGGRRN.

This sequence belongs to the amiloride-sensitive sodium channel (TC 1.A.6) family. SCNN1A subfamily. As to quaternary structure, heterotrimer; containing an alpha/SCNN1A, a beta/SCNN1B and a gamma/SCNN1G subunit. Interacts with shroom1.

Its subcellular location is the apical cell membrane. It is found in the cell projection. It localises to the cilium. The protein localises to the cytoplasmic granule. The protein resides in the cytoplasm. Its subcellular location is the cytoplasmic vesicle. It is found in the secretory vesicle. It localises to the acrosome. The protein localises to the flagellum. The catalysed reaction is Na(+)(in) = Na(+)(out). With respect to regulation, originally identified and characterized by its inhibition by the diuretic drug amiloride. This is one of the three pore-forming subunits of the heterotrimeric epithelial sodium channel (ENaC), a critical regulator of sodium balance and fluid homeostasis. ENaC operates in epithelial tissues, where it mediates the electrodiffusion of sodium ions from extracellular fluid through the apical membrane of cells, with water following osmotically. It plays a key role in maintaining sodium homeostasis through electrogenic sodium reabsorption in the kidneys. The protein is Epithelial sodium channel subunit alpha of Xenopus laevis (African clawed frog).